We begin with the raw amino-acid sequence, 211 residues long: Large ribosomal subunit protein uL4 (211 aa).

The tract at residues 42 to 87 is disordered; it reads AHMRQGTASTLTRSEVRGGGRKPYKQKGTGRARQGSVRTPLRPGGG. Residues 60 to 71 show a composition bias toward basic residues; the sequence is GGRKPYKQKGTG.

Belongs to the universal ribosomal protein uL4 family. Part of the 50S ribosomal subunit.

Functionally, one of the primary rRNA binding proteins, this protein initially binds near the 5'-end of the 23S rRNA. It is important during the early stages of 50S assembly. It makes multiple contacts with different domains of the 23S rRNA in the assembled 50S subunit and ribosome. Forms part of the polypeptide exit tunnel. This Synechococcus sp. (strain CC9902) protein is Large ribosomal subunit protein uL4.